A 122-amino-acid polypeptide reads, in one-letter code: MRFSIISASLVLIFANVKAFNEEEILEIFCGVPKKLVSRYNQCLIDHGPEIIKKNYEIINSCMKGHLGSETESAMEYVCNKKNVDISIKRCISDKISEEMKEFDRRARLEVWDVLYVCIFKA.

A signal peptide spans 1 to 19 (MRFSIISASLVLIFANVKA).

Post-translationally, contains 3 disulfide bonds. In terms of tissue distribution, expressed by the venom gland.

Its subcellular location is the secreted. The chain is Venom protein 7.1 from Lychas mucronatus (Chinese swimming scorpion).